We begin with the raw amino-acid sequence, 1034 residues long: Phosphoenolpyruvate carboxylase (1034 aa).

Active-site residues include His203 and Lys680.

This sequence belongs to the PEPCase type 1 family. The cofactor is Mg(2+).

The catalysed reaction is oxaloacetate + phosphate = phosphoenolpyruvate + hydrogencarbonate. Forms oxaloacetate, a four-carbon dicarboxylic acid source for the tricarboxylic acid cycle. This chain is Phosphoenolpyruvate carboxylase (ppc), found in Synechocystis sp. (strain ATCC 27184 / PCC 6803 / Kazusa).